The sequence spans 179 residues: Lebocin-4 (179 aa).

The signal sequence occupies residues 1 to 16 (MYKFLVFSSVLVLFFA). Positions 17 to 120 (QASCQRFIQP…RPIESHRNTR (104 aa)) are excised as a propeptide. An O-linked (GalNAc...) threonine glycan is attached at threonine 135. Positions 153–179 (RRHASDDQEELRHHNEHFLIPRDILQD) are excised as a propeptide.

Belongs to the lebocin family. Post-translationally, O-glycosylation is important for the antibacterial activity of lebocin. As to expression, hemolymph. Produced in fat body.

The protein localises to the secreted. Antibacterial peptide. This is Lebocin-4 (LEB4) from Bombyx mori (Silk moth).